Consider the following 216-residue polypeptide: Pyrrolidone-carboxylate peptidase (216 aa).

Residues glutamate 80, cysteine 143, and histidine 167 contribute to the active site.

The protein belongs to the peptidase C15 family. As to quaternary structure, homotetramer.

The protein resides in the cytoplasm. The enzyme catalyses Release of an N-terminal pyroglutamyl group from a polypeptide, the second amino acid generally not being Pro.. Functionally, removes 5-oxoproline from various penultimate amino acid residues except L-proline. The polypeptide is Pyrrolidone-carboxylate peptidase (pcp) (Streptomyces coelicolor (strain ATCC BAA-471 / A3(2) / M145)).